Here is a 1201-residue protein sequence, read N- to C-terminus: ATP-dependent helicase/deoxyribonuclease subunit B (1201 aa).

It belongs to the helicase family. AddB/RexB type 2 subfamily. Heterodimer of AddA and RexB. Mg(2+) is required as a cofactor.

Its function is as follows. The heterodimer acts as both an ATP-dependent DNA helicase and an ATP-dependent, dual-direction single-stranded exonuclease. Recognizes the chi site generating a DNA molecule suitable for the initiation of homologous recombination. This subunit has 5' -&gt; 3' nuclease activity but not helicase activity. The sequence is that of ATP-dependent helicase/deoxyribonuclease subunit B from Levilactobacillus brevis (strain ATCC 367 / BCRC 12310 / CIP 105137 / JCM 1170 / LMG 11437 / NCIMB 947 / NCTC 947) (Lactobacillus brevis).